Reading from the N-terminus, the 326-residue chain is MTCFQTIAVIGAGAWGTALAAVAARAGRDVTLYARDADHASHIASARENPRLPGIPLASRIAVTADLARAARADTVLIVVPAQHLRGAVMHVAPLLAPGTPLVACAKGIEHGTHKFMTEVIAEAAPCATPAILSGPSFAHDVARGLPTAVTLAAPDEALAAALVQALGSPTFRPYHSTDVRGVEIGGAAKNVLAIAAGIVAGRQLGASALAALTTRGFAELVRLGRAHGARSETLTGLSGLGDLILTCAGPQSRNFAAGLALGRGEPLPAGKLAEGQYTAPVLVELAAARGVEMPVAQAVAAILAGAVTIDAAIEALMLRPFKAEE.

NADPH is bound by residues Trp15, Arg35, and Lys107. Sn-glycerol 3-phosphate-binding residues include Lys107, Gly135, and Ser137. Residue Ala139 participates in NADPH binding. Positions 190, 243, 253, 254, and 255 each coordinate sn-glycerol 3-phosphate. Lys190 functions as the Proton acceptor in the catalytic mechanism. Arg254 serves as a coordination point for NADPH. The NADPH site is built by Leu273 and Glu275.

The protein belongs to the NAD-dependent glycerol-3-phosphate dehydrogenase family.

The protein localises to the cytoplasm. It carries out the reaction sn-glycerol 3-phosphate + NAD(+) = dihydroxyacetone phosphate + NADH + H(+). The enzyme catalyses sn-glycerol 3-phosphate + NADP(+) = dihydroxyacetone phosphate + NADPH + H(+). The protein operates within membrane lipid metabolism; glycerophospholipid metabolism. Catalyzes the reduction of the glycolytic intermediate dihydroxyacetone phosphate (DHAP) to sn-glycerol 3-phosphate (G3P), the key precursor for phospholipid synthesis. The polypeptide is Glycerol-3-phosphate dehydrogenase [NAD(P)+] (Bradyrhizobium sp. (strain BTAi1 / ATCC BAA-1182)).